The following is a 603-amino-acid chain: MGDICETVEATFHGVAYLLTVSTIEGETLCVEVEQKSDCSRWRGDFTSRYIEDITAKTGNFKKFPVFVKMLLSALKQASDSVFVDLLTYQDLEVLKSRKAGGQAPPPRTQPPNNKRYLIMTYAAEFDRVHYPLPLLFEENPDPQHLKRIISQLRSEVEGLQVEAGNRRGGEVSAELRRLREENAALQRQLKQMERSGSGVGAGAESSEARELARELRTVRKERDLLQARVEAAEAELERERGLHRRELRRRAKEQQELVDELGRCKEQIRELKMRIRQLTEDLEARDRRMNSTDRIRSVYARGSNDGSTSGVAPRRPSSGGRGPSSNYMAPTRGADSRSNSRGRGTSSAERSRPNSAPIGGPRPRFDPTEYVRQRKERESAAVGGRRSNAPTPPRSAGTSRASSVVGSRPASAERLPPIRTASPTNSRPSSTERYRPGSGGPPGRTSAGGSRGAADRAGARGPDPYAPRSRGASPSGRATAWGEPGASGGGAGGWSKFPGGGGGGVGGSGQRISSNSPRSMSPARALAEVKQKLSTFVAGRGGSLQGDDASSAHGEHMSQSSKSQVFEDATAEIADIDSRLHALQNFLRMAKTSSTSTSTTQA.

Residues 169-289 (GGEVSAELRR…TEDLEARDRR (121 aa)) are a coiled coil. Residues 288 to 297 (RRMNSTDRIR) show a composition bias toward basic and acidic residues. Disordered regions lie at residues 288 to 526 (RRMN…PARA) and 539 to 564 (AGRG…SSKS). The span at 337 to 348 (SRSNSRGRGTSS) shows a compositional bias: low complexity. Residues 364 to 380 (PRFDPTEYVRQRKERES) show a composition bias toward basic and acidic residues. Residues 397-406 (AGTSRASSVV) are compositionally biased toward polar residues. The span at 486–510 (GASGGGAGGWSKFPGGGGGGVGGSG) shows a compositional bias: gly residues. Positions 511-520 (QRISSNSPRS) are enriched in polar residues.

This sequence belongs to the CCDC61 family.

The protein localises to the cytoplasm. It is found in the cytoskeleton. It localises to the flagellum basal body. Functionally, required for normal flagella and striated fiber formation. The polypeptide is Variable flagella 3 (Chlamydomonas reinhardtii (Chlamydomonas smithii)).